We begin with the raw amino-acid sequence, 136 residues long: C-type natriuretic peptide prohormone (136 aa).

The signal sequence occupies residues 1 to 21; it reads MSGQTSFYCGLLLVLLIQAQA. A disulfide bond links cysteine 120 and cysteine 136.

Belongs to the natriuretic peptide family. As to expression, CNP-115 is differentially processed to produce CNP-38 and CNP-39 in the heart and CNP-22 in the brain.

Its subcellular location is the secreted. In terms of biological role, hormone which may be vasoactive and natriuretic. Has a cGMP-stimulating activity. This Triakis scyllium (Banded houndshark) protein is C-type natriuretic peptide prohormone.